The chain runs to 378 residues: MAVDLLSIYGPGLFESLLTVKGATGLIAALILGYIIITRLPGQKTKPKLLDLTAGGIPFEKVGEVFNDYDKSYGKGTHGELHVQDTNKVFQLANTFYDFVTDGYEWAWGSSFHFSQRMPGLSHAASQMLHESRMASYLRLKPGMTCLDVGCGVGNPGRTVAACSGAVVTGITINKYQIQRAEYHNRRTGLVGFFKPTVGNFCNMPFDAKSFDAAFAMDATCHAPKLEDVYGEVFRVLKPGGFFATYEWVSTKNYDPTNTRHVKVMNSIIFGNGLPNIRSWKQAEEAGENVGFKLLTSFDLATAPPVGKPWYYVPELMVKYGLLKIQKALVRGACSLGLLPDQSWKVCNMVADMVPNLVEGGATDIFTPMHLLIFQKPE.

Residues 17–37 form a helical membrane-spanning segment; sequence LLTVKGATGLIAALILGYIII.

It belongs to the class I-like SAM-binding methyltransferase superfamily. Erg6/SMT family.

It is found in the microsome membrane. The enzyme catalyses squalene + 2 S-adenosyl-L-methionine = 3,22-dimethyl-1,2,23,24-tetradehydro-2,3,22,23-tetrahydrosqualene + 2 S-adenosyl-L-homocysteine + 2 H(+). Functionally, converts squalene to mono- and dimethyl derivatives, but not to tri- and tetramethylated products. Unable to methylate cycloartenol, zymosterol or lanosterol. Methylates both C-3 and C22 positions, but only C-3 position in monomethylated products. Produces mainly monomethylated squalene and only 20% of dimethylated squalene. This Botryococcus braunii (Green alga) protein is Squalene methyltransferase 2 (TMT-2).